Reading from the N-terminus, the 2505-residue chain is Fatty acid synthase (2505 aa).

Position 1 is an N-acetylmethionine (Met1). Positions Met1–Pro406 constitute a Ketosynthase family 3 (KS3) domain. At Lys59 the chain carries N6-acetyllysine. A Phosphoserine modification is found at Ser63. Lys70 carries the N6-acetyllysine modification. Cys161 functions as the For beta-ketoacyl synthase activity in the catalytic mechanism. Ser207 carries the phosphoserine modification. Catalysis depends on His293, which acts as the For beta-ketoacyl synthase activity. Residue Lys298 is modified to N6-acetyllysine. His331 acts as the For beta-ketoacyl synthase activity in catalysis. The tract at residues Arg429–Pro817 is acyl and malonyl transferases. Position 528 is an N6-acetyllysine (Lys528). The active-site For malonyltransferase activity is Ser581. An acyl-CoA is bound by residues Asp647 to Thr648 and Phe671. An N6-acetyllysine modification is found at Lys673. Ser725 carries the phosphoserine modification. Residue Arg773 participates in an acyl-CoA binding. At Lys790 the chain carries N6-acetyllysine. The N-terminal hotdog fold stretch occupies residues Ile844–Ser966. The PKS/mFAS DH domain maps to Ile844–Val1112. Residue His878 is the Proton acceptor; for dehydratase activity of the active site. The interval Val983–Val1112 is C-terminal hotdog fold. Lys993 is modified (N6-acetyllysine). Asp1032 functions as the Proton donor; for dehydratase activity in the catalytic mechanism. Lys1276 bears the N6-acetyllysine mark. Cys1464 carries the post-translational modification S-nitrosocysteine. Phosphoserine occurs at positions 1578 and 1588. Positions Asp1629 to Ala1857 are enoyl reductase. Residue Val1665–Ala1682 participates in NADP(+) binding. Position 1698 is an N6-(pyridoxal phosphate)lysine; alternate (Lys1698). Position 1698 is an N6-acetyllysine; alternate (Lys1698). N6-acetyllysine occurs at positions 1765, 1841, and 1989. Lys1765–Leu1780 serves as a coordination point for NADP(+). The beta-ketoacyl reductase stretch occupies residues Met1858–His2113. At Cys2085 the chain carries S-nitrosocysteine. One can recognise a Carrier domain in the interval His2113–Thr2193. At Ser2151 the chain carries O-(pantetheine 4'-phosphoryl)serine; alternate. At Ser2151 the chain carries Phosphoserine; alternate. Phosphoserine occurs at positions 2191 and 2230. The tract at residues Asn2202–Gly2505 is thioesterase. Ser2302 acts as the For thioesterase activity in catalysis. Lys2385 bears the N6-acetyllysine mark. Residue Lys2443 forms a Glycyl lysine isopeptide (Lys-Gly) (interchain with G-Cter in SUMO2) linkage. Residue His2475 is the For thioesterase activity of the active site.

As to quaternary structure, homodimer which is arranged in a head to tail fashion. Interacts with CEACAM1; this interaction is insulin and phosphorylation-dependent; reduces fatty-acid synthase activity. Post-translationally, S-nitrosylation of Fatty acid synthase at cysteine residues Cys-1464 or Cys-2085 is important for the enzyme dimerization. In adipocytes, S-nitrosylation of Fatty acid synthase occurs under physiological conditions and gradually increases during adipogenesis.

The protein localises to the cytoplasm. Its subcellular location is the melanosome. It catalyses the reaction acetyl-CoA + n malonyl-CoA + 2n NADPH + 2n H(+) = a long-chain fatty acid + (n+1) CoA + n CO2 + 2n NADP(+).. The catalysed reaction is holo-[ACP] + acetyl-CoA = acetyl-[ACP] + CoA. It carries out the reaction holo-[ACP] + malonyl-CoA = malonyl-[ACP] + CoA. The enzyme catalyses a fatty acyl-[ACP] + malonyl-[ACP] + H(+) = a 3-oxoacyl-[ACP] + holo-[ACP] + CO2. It catalyses the reaction a (3R)-hydroxyacyl-[ACP] + NADP(+) = a 3-oxoacyl-[ACP] + NADPH + H(+). The catalysed reaction is a (3R)-hydroxyacyl-[ACP] = a (2E)-enoyl-[ACP] + H2O. It carries out the reaction a 2,3-saturated acyl-[ACP] + NADP(+) = a (2E)-enoyl-[ACP] + NADPH + H(+). The enzyme catalyses hexadecanoyl-[ACP] + H2O = hexadecanoate + holo-[ACP] + H(+). It catalyses the reaction acetyl-[ACP] + malonyl-[ACP] + H(+) = 3-oxobutanoyl-[ACP] + holo-[ACP] + CO2. The catalysed reaction is 3-oxobutanoyl-[ACP] + NADPH + H(+) = (3R)-hydroxybutanoyl-[ACP] + NADP(+). It carries out the reaction (3R)-hydroxybutanoyl-[ACP] = (2E)-butenoyl-[ACP] + H2O. The enzyme catalyses (2E)-butenoyl-[ACP] + NADPH + H(+) = butanoyl-[ACP] + NADP(+). It catalyses the reaction butanoyl-[ACP] + malonyl-[ACP] + H(+) = 3-oxohexanoyl-[ACP] + holo-[ACP] + CO2. The catalysed reaction is 3-oxohexanoyl-[ACP] + NADPH + H(+) = (3R)-hydroxyhexanoyl-[ACP] + NADP(+). It carries out the reaction (3R)-hydroxyhexanoyl-[ACP] = (2E)-hexenoyl-[ACP] + H2O. The enzyme catalyses (2E)-hexenoyl-[ACP] + NADPH + H(+) = hexanoyl-[ACP] + NADP(+). It catalyses the reaction hexanoyl-[ACP] + malonyl-[ACP] + H(+) = 3-oxooctanoyl-[ACP] + holo-[ACP] + CO2. The catalysed reaction is 3-oxooctanoyl-[ACP] + NADPH + H(+) = (3R)-hydroxyoctanoyl-[ACP] + NADP(+). It carries out the reaction (3R)-hydroxyoctanoyl-[ACP] = (2E)-octenoyl-[ACP] + H2O. The enzyme catalyses (2E)-octenoyl-[ACP] + NADPH + H(+) = octanoyl-[ACP] + NADP(+). It catalyses the reaction octanoyl-[ACP] + malonyl-[ACP] + H(+) = 3-oxodecanoyl-[ACP] + holo-[ACP] + CO2. The catalysed reaction is 3-oxodecanoyl-[ACP] + NADPH + H(+) = (3R)-hydroxydecanoyl-[ACP] + NADP(+). It carries out the reaction (3R)-hydroxydecanoyl-[ACP] = (2E)-decenoyl-[ACP] + H2O. The enzyme catalyses (2E)-decenoyl-[ACP] + NADPH + H(+) = decanoyl-[ACP] + NADP(+). It catalyses the reaction decanoyl-[ACP] + malonyl-[ACP] + H(+) = 3-oxododecanoyl-[ACP] + holo-[ACP] + CO2. The catalysed reaction is 3-oxododecanoyl-[ACP] + NADPH + H(+) = (3R)-hydroxydodecanoyl-[ACP] + NADP(+). It carries out the reaction (3R)-hydroxydodecanoyl-[ACP] = (2E)-dodecenoyl-[ACP] + H2O. The enzyme catalyses (2E)-dodecenoyl-[ACP] + NADPH + H(+) = dodecanoyl-[ACP] + NADP(+). It catalyses the reaction dodecanoyl-[ACP] + malonyl-[ACP] + H(+) = 3-oxotetradecanoyl-[ACP] + holo-[ACP] + CO2. The catalysed reaction is 3-oxotetradecanoyl-[ACP] + NADPH + H(+) = (3R)-hydroxytetradecanoyl-[ACP] + NADP(+). It carries out the reaction (3R)-hydroxytetradecanoyl-[ACP] = (2E)-tetradecenoyl-[ACP] + H2O. The enzyme catalyses (2E)-tetradecenoyl-[ACP] + NADPH + H(+) = tetradecanoyl-[ACP] + NADP(+). It catalyses the reaction tetradecanoyl-[ACP] + malonyl-[ACP] + H(+) = 3-oxohexadecanoyl-[ACP] + holo-[ACP] + CO2. The catalysed reaction is 3-oxohexadecanoyl-[ACP] + NADPH + H(+) = (3R)-hydroxyhexadecanoyl-[ACP] + NADP(+). It carries out the reaction (3R)-hydroxyhexadecanoyl-[ACP] = (2E)-hexadecenoyl-[ACP] + H2O. The enzyme catalyses (2E)-hexadecenoyl-[ACP] + NADPH + H(+) = hexadecanoyl-[ACP] + NADP(+). It catalyses the reaction hexadecanoyl-[ACP] + malonyl-[ACP] + H(+) = 3-oxooctadecanoyl-[ACP] + holo-[ACP] + CO2. The catalysed reaction is 3-oxooctadecanoyl-[ACP] + NADPH + H(+) = (3R)-hydroxyoctadecanoyl-[ACP] + NADP(+). It carries out the reaction (3R)-hydroxyoctadecanoyl-[ACP] = (2E)-octadecenoyl-[ACP] + H2O. The enzyme catalyses (2E)-octadecenoyl-[ACP] + NADPH + H(+) = octadecanoyl-[ACP] + NADP(+). It catalyses the reaction tetradecanoyl-[ACP] + H2O = tetradecanoate + holo-[ACP] + H(+). The catalysed reaction is octadecanoyl-[ACP] + H2O = octadecanoate + holo-[ACP] + H(+). The protein operates within lipid metabolism; fatty acid biosynthesis. Its activity is regulated as follows. Cerulenin, a potent non-competitive pharmacological inhibitor of FAS, binds covalently to the active site of the condensing enzyme region, inactivating a key enzyme step in fatty acid synthesis. Another inhibitor, though less efficient, is C75, a member of the alpha-methylene-gamma-butyrolactone chemical class, also proposed as an antitumour and anti-obesity agent. Fatty acid synthetase is a multifunctional enzyme that catalyzes the de novo biosynthesis of long-chain saturated fatty acids starting from acetyl-CoA and malonyl-CoA in the presence of NADPH. This multifunctional protein contains 7 catalytic activities and a site for the binding of the prosthetic group 4'-phosphopantetheine of the acyl carrier protein ([ACP]) domain. The polypeptide is Fatty acid synthase (Fasn) (Rattus norvegicus (Rat)).